Consider the following 404-residue polypeptide: Probable tRNA sulfurtransferase (404 aa).

One can recognise a THUMP domain in the interval 61–166 (QTLVTGLPKI…HDATYMMAQV (106 aa)). Residues 184–185 (ML), 209–210 (HF), arginine 266, glycine 288, and glutamine 297 each bind ATP.

Belongs to the ThiI family.

Its subcellular location is the cytoplasm. It catalyses the reaction [ThiI sulfur-carrier protein]-S-sulfanyl-L-cysteine + a uridine in tRNA + 2 reduced [2Fe-2S]-[ferredoxin] + ATP + H(+) = [ThiI sulfur-carrier protein]-L-cysteine + a 4-thiouridine in tRNA + 2 oxidized [2Fe-2S]-[ferredoxin] + AMP + diphosphate. The enzyme catalyses [ThiS sulfur-carrier protein]-C-terminal Gly-Gly-AMP + S-sulfanyl-L-cysteinyl-[cysteine desulfurase] + AH2 = [ThiS sulfur-carrier protein]-C-terminal-Gly-aminoethanethioate + L-cysteinyl-[cysteine desulfurase] + A + AMP + 2 H(+). Its pathway is cofactor biosynthesis; thiamine diphosphate biosynthesis. Catalyzes the ATP-dependent transfer of a sulfur to tRNA to produce 4-thiouridine in position 8 of tRNAs, which functions as a near-UV photosensor. Also catalyzes the transfer of sulfur to the sulfur carrier protein ThiS, forming ThiS-thiocarboxylate. This is a step in the synthesis of thiazole, in the thiamine biosynthesis pathway. The sulfur is donated as persulfide by IscS. The chain is Probable tRNA sulfurtransferase from Lysinibacillus sphaericus (strain C3-41).